The sequence spans 1588 residues: Pentafunctional AROM polypeptide (1588 aa).

Residues 1–392 (MVQLAKVPIL…YGDSAQFVSD (392 aa)) form a 3-dehydroquinate synthase region. NAD(+) is bound by residues 43-45 (DTN), 78-81 (ETSK), 109-111 (GGV), and Asp114. A 7-phospho-2-dehydro-3-deoxy-D-arabino-heptonate-binding site is contributed by Arg125. An NAD(+)-binding site is contributed by 134–135 (TS). 7-phospho-2-dehydro-3-deoxy-D-arabino-heptonate is bound by residues Asp141 and Lys147. Residue Lys156 coordinates NAD(+). A 7-phospho-2-dehydro-3-deoxy-D-arabino-heptonate-binding site is contributed by Asn157. NAD(+)-binding positions include 174-177 (WLET) and Asn185. Residue Glu189 participates in Zn(2+) binding. Residues 189–192 (EVIK) and Lys258 each bind 7-phospho-2-dehydro-3-deoxy-D-arabino-heptonate. Glu268 serves as the catalytic Proton acceptor; for 3-dehydroquinate synthase activity. 7-phospho-2-dehydro-3-deoxy-D-arabino-heptonate is bound by residues 272–276 (RNLLN) and His279. His279 contacts Zn(2+). His283 functions as the Proton acceptor; for 3-dehydroquinate synthase activity in the catalytic mechanism. 7-phospho-2-dehydro-3-deoxy-D-arabino-heptonate contacts are provided by His295 and Lys364. Residue His295 coordinates Zn(2+). An EPSP synthase region spans residues 405 to 871 (VYPFKDIPAD…WDVLHSELGA (467 aa)). Cys853 acts as the For EPSP synthase activity in catalysis. The tract at residues 890-1080 (SVVIIGMRAA…IPSGRSAFVC (191 aa)) is shikimate kinase. An ATP-binding site is contributed by 895 to 902 (GMRAAGKT). A 3-dehydroquinase region spans residues 1081–1293 (LTFDDLTEQT…AAPGQLTVAQ (213 aa)). Residue His1198 is the Proton acceptor; for 3-dehydroquinate dehydratase activity of the active site. Lys1227 acts as the Schiff-base intermediate with substrate; for 3-dehydroquinate dehydratase activity in catalysis. The interval 1306 to 1588 (PKELFVVGKP…KAIFDAVTKE (283 aa)) is shikimate dehydrogenase.

In the N-terminal section; belongs to the sugar phosphate cyclases superfamily. Dehydroquinate synthase family. This sequence in the 2nd section; belongs to the EPSP synthase family. It in the 3rd section; belongs to the shikimate kinase family. The protein in the 4th section; belongs to the type-I 3-dehydroquinase family. In the C-terminal section; belongs to the shikimate dehydrogenase family. In terms of assembly, homodimer. Zn(2+) is required as a cofactor.

It is found in the cytoplasm. The catalysed reaction is 7-phospho-2-dehydro-3-deoxy-D-arabino-heptonate = 3-dehydroquinate + phosphate. It catalyses the reaction 3-dehydroquinate = 3-dehydroshikimate + H2O. It carries out the reaction shikimate + NADP(+) = 3-dehydroshikimate + NADPH + H(+). The enzyme catalyses shikimate + ATP = 3-phosphoshikimate + ADP + H(+). The catalysed reaction is 3-phosphoshikimate + phosphoenolpyruvate = 5-O-(1-carboxyvinyl)-3-phosphoshikimate + phosphate. It functions in the pathway metabolic intermediate biosynthesis; chorismate biosynthesis; chorismate from D-erythrose 4-phosphate and phosphoenolpyruvate: step 2/7. Its pathway is metabolic intermediate biosynthesis; chorismate biosynthesis; chorismate from D-erythrose 4-phosphate and phosphoenolpyruvate: step 3/7. The protein operates within metabolic intermediate biosynthesis; chorismate biosynthesis; chorismate from D-erythrose 4-phosphate and phosphoenolpyruvate: step 4/7. It participates in metabolic intermediate biosynthesis; chorismate biosynthesis; chorismate from D-erythrose 4-phosphate and phosphoenolpyruvate: step 5/7. It functions in the pathway metabolic intermediate biosynthesis; chorismate biosynthesis; chorismate from D-erythrose 4-phosphate and phosphoenolpyruvate: step 6/7. The AROM polypeptide catalyzes 5 consecutive enzymatic reactions in prechorismate polyaromatic amino acid biosynthesis. This chain is Pentafunctional AROM polypeptide, found in Saccharomyces cerevisiae (strain RM11-1a) (Baker's yeast).